A 472-amino-acid chain; its full sequence is Coronin-6 (472 aa).

WD repeat units lie at residues Q23–L64, K72–I111, E122–V161, E165–P204, V210–P251, and E256–I296. Residues K407–Q433 are disordered. The segment covering R420–Q433 has biased composition (polar residues). The stretch at L430 to L464 forms a coiled coil.

The chain is Coronin-6 (CORO6) from Homo sapiens (Human).